Reading from the N-terminus, the 117-residue chain is uncharacterized protein (117 aa).

The disordered stretch occupies residues 16 to 56; the sequence is FSQSSDGRSNGGGSSSGDSVSTTSDGLLTTGTSPNTSSTSL. The span at 31-56 shows a compositional bias: low complexity; the sequence is SGDSVSTTSDGLLTTGTSPNTSSTSL.

This is an uncharacterized protein from Saccharomyces cerevisiae (strain ATCC 204508 / S288c) (Baker's yeast).